Here is a 724-residue protein sequence, read N- to C-terminus: RINT1-like protein (724 aa).

In terms of domain architecture, RINT1/TIP20 spans Arg163–Phe724.

Belongs to the RINT1 family.

During cytokinesis in male meiotic cells, required for completion of cleavage furrow ingression possibly in conjunction with Zw10. Required for maintenance of Golgi stack number and morphology. Essential for acroblast assembly. This is RINT1-like protein from Drosophila melanogaster (Fruit fly).